The primary structure comprises 261 residues: ATP synthase subunit a (261 aa).

The next 6 membrane-spanning stretches (helical) occupy residues isoleucine 45–leucine 65, valine 107–phenylalanine 127, methionine 133–methionine 153, methionine 162–isoleucine 182, isoleucine 209–isoleucine 229, and leucine 232–leucine 252.

Belongs to the ATPase A chain family. As to quaternary structure, F-type ATPases have 2 components, CF(1) - the catalytic core - and CF(0) - the membrane proton channel. CF(1) has five subunits: alpha(3), beta(3), gamma(1), delta(1), epsilon(1). CF(0) has four main subunits: a, b, b' and c.

The protein localises to the cell inner membrane. Key component of the proton channel; it plays a direct role in the translocation of protons across the membrane. The chain is ATP synthase subunit a from Cereibacter sphaeroides (strain ATCC 17029 / ATH 2.4.9) (Rhodobacter sphaeroides).